Here is a 1320-residue protein sequence, read N- to C-terminus: Transcriptional activator MN1 (1320 aa).

M1 bears the N-acetylmethionine mark. Disordered regions lie at residues 1 to 26 (MFGL…FNET), 92 to 121 (FGGQ…FGGP), 147 to 219 (PPFA…SLEP), 231 to 411 (LEYN…EYPI), 423 to 442 (SEPV…NQRL), 474 to 615 (NGSM…AGRL), 629 to 819 (SAWF…KDNL), 840 to 1150 (GAPN…PDEI), and 1247 to 1273 (PWEK…SASQ). The span at 98-113 (HHGHPGSHHPHQHHPH) shows a compositional bias: basic residues. 2 stretches are compositionally biased toward low complexity: residues 202-214 (SFHG…GSDS) and 291-309 (QPPQ…QQQQ). Over residues 338 to 366 (MQPPQQAPPPPQQQPPQQPPQQQPPPPPG) the composition is skewed to pro residues. Over residues 498 to 514 (FTPPVPDSFPSGPPLQH) the composition is skewed to pro residues. Composition is skewed to low complexity over residues 523 to 550 (QQQQ…QQQQ) and 564 to 578 (RNQQ…LAQL). Composition is skewed to gly residues over residues 582-596 (GDVG…GPVG) and 701-710 (QFGGSLGGLG). The segment covering 759–768 (SGPGVNSPPS) has biased composition (low complexity). The segment covering 769–784 (AGGGGGSSGGGGGGGA) has biased composition (gly residues). Low complexity-rich tracts occupy residues 798–809 (SASKLGALSLGS) and 895–905 (GTSSSGSKASG). The span at 914-930 (DGTSLSPNYTLESTSGN) shows a compositional bias: polar residues. A phosphoserine mark is found at S950 and S954. Residues 973 to 984 (GVSPGQQQASGA) show a composition bias toward low complexity. The residue at position 1007 (S1007) is a Phosphoserine. A compositionally biased stretch (polar residues) spans 1048–1066 (EVSTSYANEDEVSSSSDNP). S1081 carries the phosphoserine modification. A compositionally biased stretch (gly residues) spans 1118–1128 (YGGGGGPGHPG).

In terms of assembly, interacts with PBX1, PKNOX1, ZBTB24, E2F7, RING1. As to expression, widely expressed in fetal and adult tissues. Highest expression is observed in fetal brain and skeletal muscle, and adult skeletal muscle.

Its subcellular location is the nucleus. Functionally, transcriptional activator which specifically regulates expression of TBX22 in the posterior region of the developing palate. Required during later stages of palate development for growth and medial fusion of the palatal shelves. Promotes maturation and normal function of calvarial osteoblasts, including expression of the osteoclastogenic cytokine TNFSF11/RANKL. Necessary for normal development of the membranous bones of the skull. May play a role in tumor suppression. In Homo sapiens (Human), this protein is Transcriptional activator MN1 (MN1).